Reading from the N-terminus, the 159-residue chain is Cytochrome c-type biogenesis protein CcmE (159 aa).

At Met-1–Arg-8 the chain is on the cytoplasmic side. The chain crosses the membrane as a helical; Signal-anchor for type II membrane protein span at residues Leu-9–Ala-29. The Periplasmic segment spans residues Leu-30–Asn-159. Residues His-130 and Tyr-134 each coordinate heme.

This sequence belongs to the CcmE/CycJ family.

The protein resides in the cell inner membrane. Heme chaperone required for the biogenesis of c-type cytochromes. Transiently binds heme delivered by CcmC and transfers the heme to apo-cytochromes in a process facilitated by CcmF and CcmH. The chain is Cytochrome c-type biogenesis protein CcmE from Pseudoalteromonas translucida (strain TAC 125).